The primary structure comprises 574 residues: Ankyrin repeat protein B18 (574 aa).

6 ANK repeats span residues 56-87 (TGYT…DVTI), 135-164 (IKSR…DPNF), 167-213 (DGYT…NLNA), 217-249 (CGNT…NFEI), 253-285 (HGLT…NVGE), and 327-356 (EGKT…DINA). In terms of domain architecture, F-box spans 541–574 (KCLLTLLPSEIIYEILYMLTIYDLYNISYPPTKV).

The polypeptide is Ankyrin repeat protein B18 (Variola virus (isolate Human/India/Ind3/1967) (VARV)).